The sequence spans 1183 residues: PAN2-PAN3 deadenylation complex catalytic subunit PAN2 (1183 aa).

The segment at 1–24 (MDGWTEISRIAATTQPPKGPSPHI) is disordered. WD repeat units lie at residues 159–207 (DLNK…SIKS), 269–309 (PFPA…NVFL), and 327–366 (SKAP…STIT). Residues 369-520 (FVNFPASIEQ…FQYKVPLSRK (152 aa)) form a linker region. Residues 521–919 (KIPNCYSRLQ…KPVILVYHDS (399 aa)) form the USP domain. Positions 977–1151 (IAIDAEFVNL…EDAYTALLLY (175 aa)) constitute an Exonuclease domain. Residues D980, E982, D1090, and D1143 each contribute to the a divalent metal cation site.

The protein belongs to the peptidase C19 family. PAN2 subfamily. In terms of assembly, forms a heterotrimer with an asymmetric homodimer of the regulatory subunit PAN3 to form the poly(A)-nuclease (PAN) deadenylation complex. A divalent metal cation is required as a cofactor.

The protein resides in the cytoplasm. The catalysed reaction is Exonucleolytic cleavage of poly(A) to 5'-AMP.. With respect to regulation, positively regulated by the regulatory subunit PAN3. In terms of biological role, catalytic subunit of the poly(A)-nuclease (PAN) deadenylation complex, one of two cytoplasmic mRNA deadenylases involved in mRNA turnover. PAN specifically shortens poly(A) tails of RNA and the activity is stimulated by poly(A)-binding protein PAB1. PAN deadenylation is followed by rapid degradation of the shortened mRNA tails by the CCR4-NOT complex. Deadenylated mRNAs are then degraded by two alternative mechanisms, namely exosome-mediated 3'-5' exonucleolytic degradation, or deadenylation-dependent mRNA decaping and subsequent 5'-3' exonucleolytic degradation by XRN1. May also be involved in post-transcriptional maturation of mRNA poly(A) tails. The chain is PAN2-PAN3 deadenylation complex catalytic subunit PAN2 from Scheffersomyces stipitis (strain ATCC 58785 / CBS 6054 / NBRC 10063 / NRRL Y-11545) (Yeast).